A 701-amino-acid chain; its full sequence is MESKIYKMELAGRELSFEIGKYALLANGAVLARYGDTAVLVTACASEKPREGINFFPLTVDYEERLYSVGKIPGGFIKREGKPSEKAILSARLIDRPIRPLFPKDFYHDVSVIATVLSVDPDNPPDVLAMLGSSVALSISDIPFEGPTGSVLVGYVDGKIVINPTAKEREVSKLHLVVSGTKDKVMMIEAGAQEIPEDIMLEAIMTAQEEIKKIVEFIEGIVKEVGKPKMQYEKRVVPEEIKQKVRELAYEKAYQYVQIPDKIERDKKLDELKEEVLKAFEGETEDTLLLVDDALYNLEKEIVRKMIAEEGKRPDGRKFDEIRPLYAEVGILPRTHGSALFKRGYTQVLTVATLGTKGEMQFLDGLEEEEAKRYMHHYNFPPYSTGESKPVRGPGRREIGHGALAERALEPVIPSEDEFPYTIRLVSEVLTSNGSTSQASVCGSTLALMDAGVPIKAPVAGISIGLITKEDGSFITLTDIQGIEDFFGDMDFKVAGTREGITAIQLDIKIHGLTKEIIEKALYQAREARLKILDFMQTVIDKPRSELSPYAPKIFKTTVDPEKIRDIIGPGGKMINKIIAKTNVKIDIEPDGRIFVAAPDDISGNRAISMIEGIGREIEVGQFFLGKVTRTASYGAFVEIYPGKEGLVHISQLDNKKLKSVDEVVKVGDLVLVKVIGIDRLGRIALSRKEALNVTYSRKAK.

2 residues coordinate Mg(2+): aspartate 485 and aspartate 491. The region spanning 552–611 (PKIFKTTVDPEKIRDIIGPGGKMINKIIAKTNVKIDIEPDGRIFVAAPDDISGNRAISMI) is the KH domain. Positions 621-689 (GQFFLGKVTR…RLGRIALSRK (69 aa)) constitute an S1 motif domain.

Belongs to the polyribonucleotide nucleotidyltransferase family. Mg(2+) serves as cofactor.

It localises to the cytoplasm. It catalyses the reaction RNA(n+1) + phosphate = RNA(n) + a ribonucleoside 5'-diphosphate. Functionally, involved in mRNA degradation. Catalyzes the phosphorolysis of single-stranded polyribonucleotides processively in the 3'- to 5'-direction. The sequence is that of Polyribonucleotide nucleotidyltransferase from Caldicellulosiruptor saccharolyticus (strain ATCC 43494 / DSM 8903 / Tp8T 6331).